Consider the following 114-residue polypeptide: Large ribosomal subunit protein bL19 (114 aa).

Belongs to the bacterial ribosomal protein bL19 family.

Its function is as follows. This protein is located at the 30S-50S ribosomal subunit interface and may play a role in the structure and function of the aminoacyl-tRNA binding site. This is Large ribosomal subunit protein bL19 from Lysinibacillus sphaericus (strain C3-41).